A 225-amino-acid polypeptide reads, in one-letter code: GTP cyclohydrolase 1 (225 aa).

Positions 1–12 (MERSKQSHDNQA) are enriched in basic and acidic residues. Positions 1–59 (MERSKQSHDNQADSRPTTNESSLNGHFDGLVKKTPGMWDVKGRGTAGESSSHTGSSVVE) are disordered. Polar residues-rich tracts occupy residues 13 to 24 (DSRPTTNESSLN) and 47 to 58 (GESSSHTGSSVV). Zn(2+) is bound by residues Cys149, His152, and Cys220.

The protein belongs to the GTP cyclohydrolase I family. Toroid-shaped homodecamer, composed of two pentamers of five dimers.

The protein localises to the cytoplasm. It is found in the nucleus. It carries out the reaction GTP + H2O = 7,8-dihydroneopterin 3'-triphosphate + formate + H(+). Its pathway is cofactor biosynthesis; 7,8-dihydroneopterin triphosphate biosynthesis; 7,8-dihydroneopterin triphosphate from GTP: step 1/1. Its activity is regulated as follows. GTP shows a positive allosteric effect, and tetrahydrobiopterin inhibits the enzyme activity. Zinc is required for catalytic activity. Inhibited by Mg(2+). Functionally, may positively regulate nitric oxide synthesis in endothelial cells. May be involved in dopamine synthesis. May modify pain sensitivity and persistence. The sequence is that of GTP cyclohydrolase 1 (gch1) from Oncorhynchus mykiss (Rainbow trout).